Consider the following 359-residue polypeptide: Mitochondrial calcium uniporter regulator 1 (359 aa).

The Mitochondrial intermembrane segment spans residues 1–68; the sequence is MDCGSVGGQR…ARGGVSRASP (68 aa). The helical transmembrane segment at 69–85 threads the bilayer; the sequence is LLLLLLVPSPRLAAAAP. The Mitochondrial matrix portion of the chain corresponds to 86–338; sequence RRQLGDWERS…LESHKLDNIK (253 aa). Residues 235-310 adopt a coiled-coil conformation; the sequence is EKSEFSALRA…VALHAQQDRA (76 aa). The helical transmembrane segment at 339–358 threads the bilayer; it reads YLAGSIFTCLTVALGFYRLW. A topological domain (mitochondrial intermembrane) is located at residue isoleucine 359.

Belongs to the CCDC90 family. In terms of assembly, interacts (via coiled coil regions) with MCU; the interaction is direct. Interacts with SMDT1/EMRE; the interaction is direct. Interacts with PPIF. In terms of tissue distribution, ubiquitously expressed.

It localises to the mitochondrion inner membrane. In terms of biological role, key regulator of mitochondrial calcium uniporter (MCU) required for calcium entry into mitochondrion. Plays a direct role in uniporter-mediated calcium uptake via a direct interaction with MCU. Probably involved in the assembly of the membrane components of the uniporter complex (uniplex). This is Mitochondrial calcium uniporter regulator 1 from Homo sapiens (Human).